The following is a 313-amino-acid chain: MSGEASTSRRKRQRVPSSVESVENGGGDAVARSGTLFELDLLDCPICCHALTSPIFQCDNGHIACSSCCTKLRNKCPSCALPIGNFRSRIMERVVEAVMVTCPNVKHGCTEKFSYGKELIHEKDCRFALCYCPAPNCNYSGVYKDLYSHFYVNHYDTWNQIGCGNFAGAWLRISEKILVLQYGQGPLIAVQCFKETQGMYVTVNCIAPCAPGVGELSFELSYKMPMGGNSTMMFKSEEMNRIQKVSFQTPEKDFMLVPYYFLGDFSTLKMEICIRKLKKDEEEADEDEESEEEEDDDDDDDDDDEEEDADEEE.

Residues 1–26 (MSGEASTSRRKRQRVPSSVESVENGG) are disordered. Residues 44 to 80 (CPICCHALTSPIFQCDNGHIACSSCCTKLRNKCPSCA) form an RING-type zinc finger. The segment at 94–277 (VVEAVMVTCP…LKMEICIRKL (184 aa)) is SBD. The SIAH-type zinc-finger motif lies at 97-155 (AVMVTCPNVKHGCTEKFSYGKELIHEKDCRFALCYCPAPNCNYSGVYKDLYSHFYVNHY). Zn(2+) contacts are provided by Cys102, Cys109, His121, Cys125, Cys132, Cys137, His149, and His154. Residues 278-313 (KKDEEEADEDEESEEEEDDDDDDDDDDEEEDADEEE) are disordered. A compositionally biased stretch (acidic residues) spans 282–313 (EEADEDEESEEEEDDDDDDDDDDEEEDADEEE).

Belongs to the SINA (Seven in absentia) family.

It catalyses the reaction S-ubiquitinyl-[E2 ubiquitin-conjugating enzyme]-L-cysteine + [acceptor protein]-L-lysine = [E2 ubiquitin-conjugating enzyme]-L-cysteine + N(6)-ubiquitinyl-[acceptor protein]-L-lysine.. It participates in protein modification; protein ubiquitination. In terms of biological role, E3 ubiquitin-protein ligase that mediates ubiquitination and subsequent proteasomal degradation of target proteins. E3 ubiquitin ligases accept ubiquitin from an E2 ubiquitin-conjugating enzyme in the form of a thioester and then directly transfers the ubiquitin to targeted substrates. It probably triggers the ubiquitin-mediated degradation of different substrates. The polypeptide is E3 ubiquitin-protein ligase SINA-like 2 (Arabidopsis thaliana (Mouse-ear cress)).